A 401-amino-acid polypeptide reads, in one-letter code: Phosphoglycerate kinase, cytosolic (401 aa).

Positions 24, 25, 27, 41, 63, 64, 66, 67, 122, 154, and 155 each coordinate (2R)-3-phosphoglycerate. Glycine 200 contacts ADP. Glycine 200 contacts CDP. AMP contacts are provided by lysine 202 and lysine 206. Lysine 206 lines the ATP pocket. ADP is bound at residue glycine 224. Glycine 224 contacts CDP. Positions 225 and 297 each coordinate AMP. Residues glycine 225 and glycine 297 each contribute to the ATP site. CDP contacts are provided by glycine 322 and phenylalanine 327. An ADP-binding site is contributed by phenylalanine 327. Residue glutamate 328 coordinates AMP. The ATP site is built by glutamate 328, aspartate 359, and serine 360. Aspartate 359 contacts Mg(2+).

Belongs to the phosphoglycerate kinase family. Monomer. Mg(2+) is required as a cofactor.

The protein localises to the cytoplasm. The enzyme catalyses (2R)-3-phosphoglycerate + ATP = (2R)-3-phospho-glyceroyl phosphate + ADP. It functions in the pathway carbohydrate degradation; glycolysis; pyruvate from D-glyceraldehyde 3-phosphate: step 2/5. This Nicotiana tabacum (Common tobacco) protein is Phosphoglycerate kinase, cytosolic.